Here is a 120-residue protein sequence, read N- to C-terminus: Large ribosomal subunit protein uL22 (120 aa).

This sequence belongs to the universal ribosomal protein uL22 family. As to quaternary structure, part of the 50S ribosomal subunit.

In terms of biological role, this protein binds specifically to 23S rRNA; its binding is stimulated by other ribosomal proteins, e.g. L4, L17, and L20. It is important during the early stages of 50S assembly. It makes multiple contacts with different domains of the 23S rRNA in the assembled 50S subunit and ribosome. Its function is as follows. The globular domain of the protein is located near the polypeptide exit tunnel on the outside of the subunit, while an extended beta-hairpin is found that lines the wall of the exit tunnel in the center of the 70S ribosome. The polypeptide is Large ribosomal subunit protein uL22 (Acaryochloris marina (strain MBIC 11017)).